Here is a 296-residue protein sequence, read N- to C-terminus: NAD kinase (296 aa).

Asp78 functions as the Proton acceptor in the catalytic mechanism. NAD(+) contacts are provided by residues 78–79 (DG), 152–153 (ND), Arg180, Asp182, and Gln251.

This sequence belongs to the NAD kinase family. It depends on a divalent metal cation as a cofactor.

Its subcellular location is the cytoplasm. The enzyme catalyses NAD(+) + ATP = ADP + NADP(+) + H(+). Functionally, involved in the regulation of the intracellular balance of NAD and NADP, and is a key enzyme in the biosynthesis of NADP. Catalyzes specifically the phosphorylation on 2'-hydroxyl of the adenosine moiety of NAD to yield NADP. This chain is NAD kinase, found in Neisseria gonorrhoeae (strain ATCC 700825 / FA 1090).